The sequence spans 211 residues: Leucyl/phenylalanyl-tRNA--protein transferase (211 aa).

Belongs to the L/F-transferase family.

The protein resides in the cytoplasm. The enzyme catalyses N-terminal L-lysyl-[protein] + L-leucyl-tRNA(Leu) = N-terminal L-leucyl-L-lysyl-[protein] + tRNA(Leu) + H(+). It carries out the reaction N-terminal L-arginyl-[protein] + L-leucyl-tRNA(Leu) = N-terminal L-leucyl-L-arginyl-[protein] + tRNA(Leu) + H(+). It catalyses the reaction L-phenylalanyl-tRNA(Phe) + an N-terminal L-alpha-aminoacyl-[protein] = an N-terminal L-phenylalanyl-L-alpha-aminoacyl-[protein] + tRNA(Phe). In terms of biological role, functions in the N-end rule pathway of protein degradation where it conjugates Leu, Phe and, less efficiently, Met from aminoacyl-tRNAs to the N-termini of proteins containing an N-terminal arginine or lysine. The polypeptide is Leucyl/phenylalanyl-tRNA--protein transferase (Flavobacterium psychrophilum (strain ATCC 49511 / DSM 21280 / CIP 103535 / JIP02/86)).